A 214-amino-acid polypeptide reads, in one-letter code: 3-isopropylmalate dehydratase small subunit (214 aa).

It belongs to the LeuD family. LeuD type 1 subfamily. Heterodimer of LeuC and LeuD.

The enzyme catalyses (2R,3S)-3-isopropylmalate = (2S)-2-isopropylmalate. It functions in the pathway amino-acid biosynthesis; L-leucine biosynthesis; L-leucine from 3-methyl-2-oxobutanoate: step 2/4. Catalyzes the isomerization between 2-isopropylmalate and 3-isopropylmalate, via the formation of 2-isopropylmaleate. This is 3-isopropylmalate dehydratase small subunit from Pseudomonas fluorescens (strain ATCC BAA-477 / NRRL B-23932 / Pf-5).